Consider the following 298-residue polypeptide: Inosose dehydratase (298 aa).

Belongs to the IolE/MocC family. It depends on glutathione as a cofactor. Co(2+) serves as cofactor. The cofactor is Mn(2+).

It catalyses the reaction scyllo-inosose = 3D-3,5/4-trihydroxycyclohexane-1,2-dione + H2O. Its function is as follows. Catalyzes the dehydration of inosose (2-keto-myo-inositol, 2KMI or 2,4,6/3,5-pentahydroxycyclohexanone) to 3D-(3,5/4)-trihydroxycyclohexane-1,2-dione (D-2,3-diketo-4-deoxy-epi-inositol). The polypeptide is Inosose dehydratase (Glaesserella parasuis serovar 5 (strain SH0165) (Haemophilus parasuis)).